The chain runs to 90 residues: Acylphosphatase (90 aa).

One can recognise an Acylphosphatase-like domain in the interval 3–90 (RYSAIVQGRV…DGEKKFSIKY (88 aa)). Active-site residues include R18 and N36.

Belongs to the acylphosphatase family.

The enzyme catalyses an acyl phosphate + H2O = a carboxylate + phosphate + H(+). The sequence is that of Acylphosphatase (acyP) from Clostridium beijerinckii (strain ATCC 51743 / NCIMB 8052) (Clostridium acetobutylicum).